A 655-amino-acid chain; its full sequence is p-hydroxybenzoic acid efflux pump subunit AaeB (655 aa).

11 helical membrane-spanning segments follow: residues 13–33, 38–58, 69–89, 93–113, 121–141, 152–172, 370–390, 407–427, 431–451, 459–479, and 482–502; these read FAVK…HFQL, WAVL…GGEP, LRII…IAMI, LLMI…SSLV, WGLA…EPLL, EIVI…PRSI, LFWL…IAVV, FIYG…VIIP, QSML…GIEV, MGAL…TFHF, and FLDS…VILL.

The protein belongs to the aromatic acid exporter ArAE (TC 2.A.85) family.

The protein localises to the cell inner membrane. In terms of biological role, forms an efflux pump with AaeA. Could function as a metabolic relief valve, allowing to eliminate certain compounds when they accumulate to high levels in the cell. The sequence is that of p-hydroxybenzoic acid efflux pump subunit AaeB from Shigella boydii serotype 18 (strain CDC 3083-94 / BS512).